Reading from the N-terminus, the 445-residue chain is Phosphoglucosamine mutase 1 (445 aa).

The active-site Phosphoserine intermediate is S102. Mg(2+) contacts are provided by S102, D241, D243, and D245. S102 carries the phosphoserine modification.

This sequence belongs to the phosphohexose mutase family. The cofactor is Mg(2+). In terms of processing, activated by phosphorylation.

The enzyme catalyses alpha-D-glucosamine 1-phosphate = D-glucosamine 6-phosphate. Its function is as follows. Catalyzes the conversion of glucosamine-6-phosphate to glucosamine-1-phosphate. This chain is Phosphoglucosamine mutase 1, found in Shewanella sp. (strain MR-7).